The following is a 415-amino-acid chain: Isocitrate dehydrogenase [NADP] (415 aa).

NADP(+) is bound by residues 77 to 79 and Arg-84; that span reads TIT. Residue Thr-79 participates in substrate binding. Residues 96-102, Arg-111, and Arg-134 each bind substrate; that span reads SPNGTIR. A Mn(2+)-binding site is contributed by Asp-254. Lys-262 is an NADP(+) binding site. Asp-277 serves as a coordination point for Mn(2+). NADP(+) contacts are provided by residues 312-317 and Asn-330; that span reads GTVTRH.

This sequence belongs to the isocitrate and isopropylmalate dehydrogenases family. In terms of assembly, heterodimer. It depends on Mg(2+) as a cofactor. The cofactor is Mn(2+).

It is found in the cytoplasm. It catalyses the reaction D-threo-isocitrate + NADP(+) = 2-oxoglutarate + CO2 + NADPH. May supply 2-oxoglutarate for amino acid biosynthesis and ammonia assimilation via the glutamine synthetase/glutamate synthase (GS/GOGAT) pathway. The protein is Isocitrate dehydrogenase [NADP] of Nicotiana tabacum (Common tobacco).